Reading from the N-terminus, the 169-residue chain is Peptide methionine sulfoxide reductase MsrA (169 aa).

The active site involves Cys10.

This sequence belongs to the MsrA Met sulfoxide reductase family.

The enzyme catalyses L-methionyl-[protein] + [thioredoxin]-disulfide + H2O = L-methionyl-(S)-S-oxide-[protein] + [thioredoxin]-dithiol. It catalyses the reaction [thioredoxin]-disulfide + L-methionine + H2O = L-methionine (S)-S-oxide + [thioredoxin]-dithiol. In terms of biological role, has an important function as a repair enzyme for proteins that have been inactivated by oxidation. Catalyzes the reversible oxidation-reduction of methionine sulfoxide in proteins to methionine. In Streptococcus agalactiae serotype Ia (strain ATCC 27591 / A909 / CDC SS700), this protein is Peptide methionine sulfoxide reductase MsrA.